We begin with the raw amino-acid sequence, 505 residues long: Actin nucleation-promoting factor WASL (505 aa).

N-acetylserine is present on serine 2. Residues 34–141 form the WH1 domain; it reads LGKKCVTMSS…KAVTDLLGRR (108 aa). 2 disordered regions span residues 138–163 and 185–205; these read LGRR…ATVD and TKEK…DIGT. The span at 186-198 shows a compositional bias: basic residues; sequence KEKKKGKAKKKRL. The region spanning 203-216 is the CRIB domain; that stretch reads IGTPSNFQHIGHVG. Residue serine 242 is modified to Phosphoserine; by TNK2. A Phosphotyrosine; by FAK1 and TNK2 modification is found at tyrosine 256. 3 disordered regions span residues 266 to 406, 449 to 468, and 477 to 505; these read EAVK…AGSK, SVTD…SGIV, and KRSK…EWED. Pro residues-rich tracts occupy residues 276–349, 356–365, and 372–391; these read APPP…PLPA, SGPPPPPPPL, and APPP…PPGL. Arginine 307 bears the Omega-N-methylarginine mark. WH2 domains lie at 405-422 and 433-450; these read SKAA…LKKV and GRDA…LKSV. Phosphoserine is present on residues serine 484 and serine 485. The segment covering 486–505 has biased composition (acidic residues); sequence DEDEDEDDDEDFEDDDEWED.

In terms of assembly, binds actin and the Arp2/3 complex. Interacts with CDC42. Interacts with FCHSD1. Interacts with FCHSD2. Binds to SH3 domains of GRB2. Interacts with the C-terminal SH3 domain of DNMBP. Interacts with SNX9. Interacts with the WW domains of PRPF40A/FBP11. Interacts with PTK2/FAK1. Interacts with PACSIN1, PACSIN2 and PACSIN3. Interacts with NOSTRIN. Binds to TNK2. Interacts with SNX33. Interacts with NONO (via second RRM domain); the interaction is direct. Component of a multiprotein complex with NONO and SFPQ; associates with the complex via direct interaction with NONO. Phosphorylation at Ser-242, Tyr-256, Ser-484 and Ser-485 enhances actin polymerization activity.

It localises to the cytoplasm. The protein localises to the cytoskeleton. It is found in the nucleus. Functionally, regulates actin polymerization by stimulating the actin-nucleating activity of the Arp2/3 complex. Involved in various processes, such as mitosis and cytokinesis, via its role in the regulation of actin polymerization. Together with CDC42, involved in the extension and maintenance of the formation of thin, actin-rich surface projections called filopodia. In addition to its role in the cytoplasm, also plays a role in the nucleus by regulating gene transcription, probably by promoting nuclear actin polymerization. Binds to HSF1/HSTF1 and forms a complex on heat shock promoter elements (HSE) that negatively regulates HSP90 expression. Plays a role in dendrite spine morphogenesis. This chain is Actin nucleation-promoting factor WASL (WASL), found in Bos taurus (Bovine).